A 335-amino-acid polypeptide reads, in one-letter code: Adenine deaminase (335 aa).

Zn(2+) contacts are provided by histidine 14, histidine 16, and histidine 194. Glutamate 197 acts as the Proton donor in catalysis. Aspartate 275 serves as a coordination point for Zn(2+). Aspartate 276 is a substrate binding site.

The protein belongs to the metallo-dependent hydrolases superfamily. Adenosine and AMP deaminases family. Adenine deaminase type 2 subfamily. Zn(2+) serves as cofactor.

The enzyme catalyses adenine + H2O + H(+) = hypoxanthine + NH4(+). Catalyzes the hydrolytic deamination of adenine to hypoxanthine. Plays an important role in the purine salvage pathway and in nitrogen catabolism. This is Adenine deaminase from Chlorobium phaeobacteroides (strain BS1).